We begin with the raw amino-acid sequence, 122 residues long: Large ribosomal subunit protein uL14 (122 aa).

It belongs to the universal ribosomal protein uL14 family. Part of the 50S ribosomal subunit. Forms a cluster with proteins L3 and L19. In the 70S ribosome, L14 and L19 interact and together make contacts with the 16S rRNA in bridges B5 and B8.

Functionally, binds to 23S rRNA. Forms part of two intersubunit bridges in the 70S ribosome. This chain is Large ribosomal subunit protein uL14, found in Borreliella burgdorferi (strain ATCC 35210 / DSM 4680 / CIP 102532 / B31) (Borrelia burgdorferi).